The primary structure comprises 485 residues: Ulvan lyase (485 aa).

The first 33 residues, methionine 1–glycine 33, serve as a signal peptide directing secretion. Cysteine 34 carries the N-palmitoyl cysteine lipid modification. Residue cysteine 34 is the site of S-diacylglycerol cysteine attachment. Substrate contacts are provided by asparagine 64 and asparagine 126. Residues phenylalanine 108–glycine 128 form a disordered region. A compositionally biased stretch (basic and acidic residues) spans leucine 115–glycine 128. The active-site Proton donor is the histidine 127. 2 residues coordinate substrate: lysine 129 and histidine 147. Tyrosine 192 serves as the catalytic Proton acceptor. The substrate site is built by arginine 208, histidine 212, and tyrosine 250. Histidine 212 provides a ligand contact to Zn(2+). Residues histidine 268, cysteine 270, and histidine 282 each contribute to the Zn(2+) site. Histidine 282 is a substrate binding site.

It belongs to the polysaccharide lyase 25 family.

It is found in the cell membrane. Its function is as follows. Ulvan lyase involved in ulvan degradation. Ulvan is the main polysaccharide component of the Ulvales (green seaweed) cell wall. It is composed of disaccharide building blocks comprising 3-sulfated rhamnose (Rha3S) linked to D-glucuronic acid (GlcA), L-iduronic acid (IduA), or D-xylose (Xyl). Ulvan lyase catalyzes the endolytic cleavage of the glycosidic bond between Rha3S and the uronic acids GlcA or IduA, producing oligosaccharides that have unsaturated 4-deoxy-L-threo-hex-4-enopyranosiduronic acid (deltaUA) at the non-reducing end. This results eventually in the degradation of the ulvan polysaccharide into deltaUA-Rha3S disaccharides and deltaUA-Rha3S-Xyl-Rha3S tetrasaccharides. This chain is Ulvan lyase, found in Alteromonas sp. (strain LOR).